We begin with the raw amino-acid sequence, 248 residues long: 7-cyano-7-deazaguanine synthase (248 aa).

Residue 22 to 32 (LSGGLDSTTCL) participates in ATP binding. Zn(2+) is bound by residues Cys-216, Cys-225, Cys-228, and Cys-231.

This sequence belongs to the QueC family. Zn(2+) is required as a cofactor.

The catalysed reaction is 7-carboxy-7-deazaguanine + NH4(+) + ATP = 7-cyano-7-deazaguanine + ADP + phosphate + H2O + H(+). It functions in the pathway purine metabolism; 7-cyano-7-deazaguanine biosynthesis. Its function is as follows. Catalyzes the ATP-dependent conversion of 7-carboxy-7-deazaguanine (CDG) to 7-cyano-7-deazaguanine (preQ(0)). The protein is 7-cyano-7-deazaguanine synthase of Leptospira biflexa serovar Patoc (strain Patoc 1 / Ames).